A 299-amino-acid chain; its full sequence is tRNA dimethylallyltransferase (299 aa).

An ATP-binding site is contributed by 13 to 20 (GPTASGKT). 15–20 (TASGKT) is a substrate binding site. Residues 38–41 (DSRQ) form an interaction with substrate tRNA region.

Belongs to the IPP transferase family. As to quaternary structure, monomer. The cofactor is Mg(2+).

It carries out the reaction adenosine(37) in tRNA + dimethylallyl diphosphate = N(6)-dimethylallyladenosine(37) in tRNA + diphosphate. Functionally, catalyzes the transfer of a dimethylallyl group onto the adenine at position 37 in tRNAs that read codons beginning with uridine, leading to the formation of N6-(dimethylallyl)adenosine (i(6)A). This is tRNA dimethylallyltransferase from Prochlorococcus marinus (strain SARG / CCMP1375 / SS120).